We begin with the raw amino-acid sequence, 420 residues long: Gamma-glutamyl phosphate reductase (420 aa).

This sequence belongs to the gamma-glutamyl phosphate reductase family.

The protein resides in the cytoplasm. The enzyme catalyses L-glutamate 5-semialdehyde + phosphate + NADP(+) = L-glutamyl 5-phosphate + NADPH + H(+). It functions in the pathway amino-acid biosynthesis; L-proline biosynthesis; L-glutamate 5-semialdehyde from L-glutamate: step 2/2. Functionally, catalyzes the NADPH-dependent reduction of L-glutamate 5-phosphate into L-glutamate 5-semialdehyde and phosphate. The product spontaneously undergoes cyclization to form 1-pyrroline-5-carboxylate. The protein is Gamma-glutamyl phosphate reductase of Laribacter hongkongensis (strain HLHK9).